Here is a 279-residue protein sequence, read N- to C-terminus: NH(3)-dependent NAD(+) synthetase (279 aa).

39 to 46 serves as a coordination point for ATP; the sequence is GLSGGIDS. Position 45 (D45) interacts with Mg(2+). R122 is a deamido-NAD(+) binding site. T142 lines the ATP pocket. E147 serves as a coordination point for Mg(2+). The deamido-NAD(+) site is built by K155 and D162. Residues K171 and S193 each coordinate ATP. 253-254 contributes to the deamido-NAD(+) binding site; that stretch reads HK.

Belongs to the NAD synthetase family. As to quaternary structure, homodimer.

The catalysed reaction is deamido-NAD(+) + NH4(+) + ATP = AMP + diphosphate + NAD(+) + H(+). Its pathway is cofactor biosynthesis; NAD(+) biosynthesis; NAD(+) from deamido-NAD(+) (ammonia route): step 1/1. In terms of biological role, catalyzes the ATP-dependent amidation of deamido-NAD to form NAD. Uses ammonia as a nitrogen source. The polypeptide is NH(3)-dependent NAD(+) synthetase (Sulfolobus acidocaldarius (strain ATCC 33909 / DSM 639 / JCM 8929 / NBRC 15157 / NCIMB 11770)).